The following is a 423-amino-acid chain: GTPase HflX (423 aa).

Residues 202–366 (PAAAIVGYTN…LLETILRNQK (165 aa)) enclose the Hflx-type G domain. Residues 208–215 (GYTNAGKS), 233–237 (FATLD), 255–258 (DTVG), 321–324 (NKID), and 344–346 (SAK) each bind GTP. Positions 215 and 235 each coordinate Mg(2+).

It belongs to the TRAFAC class OBG-HflX-like GTPase superfamily. HflX GTPase family. In terms of assembly, monomer. Associates with the 50S ribosomal subunit. The cofactor is Mg(2+).

The protein resides in the cytoplasm. GTPase that associates with the 50S ribosomal subunit and may have a role during protein synthesis or ribosome biogenesis. The sequence is that of GTPase HflX from Lacrimispora saccharolytica (strain ATCC 35040 / DSM 2544 / NRCC 2533 / WM1) (Clostridium saccharolyticum).